The following is a 152-amino-acid chain: Protein SprT-like (152 aa).

The region spanning 7 to 147 (QRLVEEVSLQ…CGKCKGKLKP (141 aa)) is the SprT-like domain. His67 contacts Zn(2+). Residue Glu68 is part of the active site. Position 71 (His71) interacts with Zn(2+).

It belongs to the SprT family. Requires Zn(2+) as cofactor.

The protein localises to the cytoplasm. This is Protein SprT-like from Bacillus cereus (strain ATCC 14579 / DSM 31 / CCUG 7414 / JCM 2152 / NBRC 15305 / NCIMB 9373 / NCTC 2599 / NRRL B-3711).